A 321-amino-acid polypeptide reads, in one-letter code: Probable arabinan endo-1,5-alpha-L-arabinosidase C (321 aa).

Residues 1-20 (MYLYTLILLFLASVNVNAYA) form the signal peptide. The active-site Proton acceptor is Asp33. 2 N-linked (GlcNAc...) asparagine glycosylation sites follow: Asn75 and Asn192. Glu200 acts as the Proton donor in catalysis. An N-linked (GlcNAc...) asparagine glycan is attached at Asn224.

The protein belongs to the glycosyl hydrolase 43 family.

It is found in the secreted. It carries out the reaction Endohydrolysis of (1-&gt;5)-alpha-arabinofuranosidic linkages in (1-&gt;5)-arabinans.. It functions in the pathway glycan metabolism; L-arabinan degradation. Endo-1,5-alpha-L-arabinanase involved in degradation of pectin. Its preferred substrate is linear 1,5-alpha-L-arabinan. The polypeptide is Probable arabinan endo-1,5-alpha-L-arabinosidase C (abnC) (Neosartorya fischeri (strain ATCC 1020 / DSM 3700 / CBS 544.65 / FGSC A1164 / JCM 1740 / NRRL 181 / WB 181) (Aspergillus fischerianus)).